Consider the following 883-residue polypeptide: Protein argonaute 16 (883 aa).

A PAZ domain is found at 254–366; it reads PVFDFLLTNQ…VPIELCHMVS (113 aa). One can recognise a Piwi domain in the interval 535–844; that stretch reads FLLCVLPERK…AAAQMGQFMK (310 aa).

It belongs to the argonaute family. Ago subfamily.

In terms of biological role, probably involved in the RNA silencing pathway. May bind to short RNAs such as microRNAs (miRNAs) or short interfering RNAs (siRNAs), and represses the translation of mRNAs which are complementary to them. The protein is Protein argonaute 16 (AGO16) of Oryza sativa subsp. japonica (Rice).